The chain runs to 350 residues: (S)-tetrahydroprotoberberine N-methyltransferase (350 aa).

S-adenosyl-L-methionine contacts are provided by Ser-91, Gly-129, Asn-153, Gln-157, Asp-179, Val-180, and Val-195. The active site involves Cys-325.

The protein belongs to the CFA/CMAS family. In terms of assembly, homodimer.

It is found in the cytoplasm. It carries out the reaction (S)-stylopine + S-adenosyl-L-methionine = (S)-cis-N-methylstylopine + S-adenosyl-L-homocysteine. The catalysed reaction is (S)-tetrahydropalmatine + S-adenosyl-L-methionine = (S)-cis-N-methyltetrahydropalmatine + S-adenosyl-L-homocysteine. It catalyses the reaction (S)-canadine + S-adenosyl-L-methionine = (S)-cis-N-methylcanadine + S-adenosyl-L-homocysteine. The enzyme catalyses (S)-scoulerine + S-adenosyl-L-methionine = (S)-cis-N-methylscoulerine + S-adenosyl-L-homocysteine. The protein operates within alkaloid biosynthesis. Functionally, N-methyltransferase with a broad substrate range, accepting protoberberine alkaloids (R,S)-stylopine, (R,S)-nandinine and (R,S)-tetrahydropalmatine, and to a lesser extent (R,S)-canadine, (R,S)-tetrahydrogroenlandicine (cheilanthifoline) and (S)-scoulerine. The chain is (S)-tetrahydroprotoberberine N-methyltransferase from Eschscholzia californica (California poppy).